The sequence spans 207 residues: Sodium/potassium-transporting ATPase subunit beta-1-interacting protein 1 (207 aa).

Transmembrane regions (helical) follow at residues 2–22 (GRCS…AAAL), 35–55 (APIL…LGTL), and 62–82 (LILY…IICF). An N-linked (GlcNAc...) asparagine glycan is attached at N100. A helical membrane pass occupies residues 147-167 (ALSSALQIFLALFGFVYACYV).

The protein belongs to the NKAIN family. In terms of assembly, interacts with atp1b1 C-terminus.

It localises to the cell membrane. In Xenopus laevis (African clawed frog), this protein is Sodium/potassium-transporting ATPase subunit beta-1-interacting protein 1 (nkain1).